The following is a 186-amino-acid chain: Adenylate kinase isoenzyme 6 homolog (186 aa).

Residues glycine 15, glycine 17, lysine 18, serine 19, and threonine 20 each contribute to the ATP site. Residues 48–71 (NLSNIIKDERLYKEFDDELDASIY) are NMPbind. The tract at residues 126–136 (KRNYTKEKIKN) is LID. Arginine 127 serves as a coordination point for ATP.

This sequence belongs to the adenylate kinase family. AK6 subfamily. In terms of assembly, monomer and homodimer. Interacts with small ribosomal subunit protein uS11. Not a structural component of 43S pre-ribosomes, but transiently interacts with them by binding to uS11.

Its subcellular location is the cytoplasm. The protein localises to the nucleus. The catalysed reaction is AMP + ATP = 2 ADP. It catalyses the reaction ATP + H2O = ADP + phosphate + H(+). Its function is as follows. Broad-specificity nucleoside monophosphate (NMP) kinase that catalyzes the reversible transfer of the terminal phosphate group between nucleoside triphosphates and monophosphates. Also has ATPase activity. Involved in the late cytoplasmic maturation steps of the 40S ribosomal particles, specifically 18S rRNA maturation. While NMP activity is not required for ribosome maturation, ATPase activity is. Associates transiently with small ribosomal subunit protein uS11. ATP hydrolysis breaks the interaction with uS11. May temporarily remove uS11 from the ribosome to enable a conformational change of the ribosomal RNA that is needed for the final maturation step of the small ribosomal subunit. Its NMP activity may have a role in nuclear energy homeostasis. This is Adenylate kinase isoenzyme 6 homolog from Plasmodium falciparum (isolate 3D7).